Reading from the N-terminus, the 34-residue chain is Photosystem I reaction center subunit XII (34 aa).

A helical transmembrane segment spans residues Leu-9 to Ile-29.

Belongs to the PsaM family.

Its subcellular location is the cellular thylakoid membrane. This Prochlorococcus marinus (strain MIT 9312) protein is Photosystem I reaction center subunit XII.